The primary structure comprises 212 residues: MEKLNFLLKNTALLPTNLQKERLVQLVLLLNKWNKAYNLTSVRDPMEMLVKHILDSIVVSPYLQGNIFIDVGTGPGLPGLPLAIINPDKKFFLLDSLGKRISFIRNAVRELELTNVEPVLSRVEEFKPDHQFDGVLSRAFASLKDMTEWCQHLLTDQGFFYALKGQYNMEEVSALSAQFSVDKIIELNVPELVGKRHLVLLKKIRINLMNYL.

Residues glycine 72, leucine 77, 123–124 (VE), and arginine 138 contribute to the S-adenosyl-L-methionine site.

Belongs to the methyltransferase superfamily. RNA methyltransferase RsmG family.

Its subcellular location is the cytoplasm. It carries out the reaction guanosine(527) in 16S rRNA + S-adenosyl-L-methionine = N(7)-methylguanosine(527) in 16S rRNA + S-adenosyl-L-homocysteine. Functionally, specifically methylates the N7 position of guanine in position 527 of 16S rRNA. This Histophilus somni (strain 2336) (Haemophilus somnus) protein is Ribosomal RNA small subunit methyltransferase G.